Here is a 351-residue protein sequence, read N- to C-terminus: C-X-C chemokine receptor type 1 (351 aa).

Residues 1–44 (MAEAEYFIWTNPEGDFEKEFGNITGMLPTGDYFIPCKRVPITNR) are Extracellular-facing. Asparagine 22 is a glycosylation site (N-linked (GlcNAc...) asparagine). A helical membrane pass occupies residues 45 to 71 (QALVVFYALVSLLSLLGNSLVMLVILY). Residues 72 to 80 (RRRTRSVMD) are Cytoplasmic-facing. Residues 81-101 (VYVLNLAIADLLFSLTLPFLA) form a helical membrane-spanning segment. Topologically, residues 102–116 (VSKLKGWIFGTPLCK) are extracellular. Cysteine 115 and cysteine 192 are joined by a disulfide. A helical membrane pass occupies residues 117–138 (MVSLLKEFNFFSGILLLACISV). The Cytoplasmic portion of the chain corresponds to 139 to 159 (DRYLAIVHATRTLARKRYLVK). Residues 160 to 179 (FVCVGIWGLSLILSLPFAIF) traverse the membrane as a helical segment. Residues 180 to 204 (RQAYKPFRSGTVCYEVLGEATTDFR) are Extracellular-facing. A helical transmembrane segment spans residues 205–225 (MTLRGLSHIFGFLLPLLTMLV). Residues 226–247 (CYGLTLRMLFKTHMRQKHRAMG) are Cytoplasmic-facing. The chain crosses the membrane as a helical span at residues 248–269 (VIFAVVLVFLLCCLPYNLVLLS). The Extracellular portion of the chain corresponds to 270 to 290 (DTLLGAHLIEDTCERRNDIDQ). A helical transmembrane segment spans residues 291–313 (ALYITEILGFSHSCLNPIIYAFV). Over 314-351 (GQNFRHEFLKILANHGLVRKEVLTHRRVAFHTSLTAIY) the chain is Cytoplasmic.

This sequence belongs to the G-protein coupled receptor 1 family. As to quaternary structure, interacts with IL8. Interacts with GNAI2.

It is found in the cell membrane. In terms of biological role, receptor to interleukin-8, which is a powerful neutrophils chemotactic factor. Binding of IL-8 to the receptor causes activation of neutrophils. This response is mediated via a G-protein that activates a phosphatidylinositol-calcium second messenger system. The polypeptide is C-X-C chemokine receptor type 1 (Cxcr1) (Mus musculus (Mouse)).